The following is a 616-amino-acid chain: Proline--tRNA ligase (616 aa).

The protein belongs to the class-II aminoacyl-tRNA synthetase family. ProS type 1 subfamily. As to quaternary structure, homodimer.

It localises to the cytoplasm. The enzyme catalyses tRNA(Pro) + L-proline + ATP = L-prolyl-tRNA(Pro) + AMP + diphosphate. Functionally, catalyzes the attachment of proline to tRNA(Pro) in a two-step reaction: proline is first activated by ATP to form Pro-AMP and then transferred to the acceptor end of tRNA(Pro). As ProRS can inadvertently accommodate and process non-cognate amino acids such as alanine and cysteine, to avoid such errors it has two additional distinct editing activities against alanine. One activity is designated as 'pretransfer' editing and involves the tRNA(Pro)-independent hydrolysis of activated Ala-AMP. The other activity is designated 'posttransfer' editing and involves deacylation of mischarged Ala-tRNA(Pro). The misacylated Cys-tRNA(Pro) is not edited by ProRS. The protein is Proline--tRNA ligase of Streptococcus gordonii (strain Challis / ATCC 35105 / BCRC 15272 / CH1 / DL1 / V288).